We begin with the raw amino-acid sequence, 342 residues long: S-adenosylmethionine:tRNA ribosyltransferase-isomerase (342 aa).

This sequence belongs to the QueA family. Monomer.

It is found in the cytoplasm. The catalysed reaction is 7-aminomethyl-7-carbaguanosine(34) in tRNA + S-adenosyl-L-methionine = epoxyqueuosine(34) in tRNA + adenine + L-methionine + 2 H(+). The protein operates within tRNA modification; tRNA-queuosine biosynthesis. Functionally, transfers and isomerizes the ribose moiety from AdoMet to the 7-aminomethyl group of 7-deazaguanine (preQ1-tRNA) to give epoxyqueuosine (oQ-tRNA). The chain is S-adenosylmethionine:tRNA ribosyltransferase-isomerase from Bacillus licheniformis (strain ATCC 14580 / DSM 13 / JCM 2505 / CCUG 7422 / NBRC 12200 / NCIMB 9375 / NCTC 10341 / NRRL NRS-1264 / Gibson 46).